The following is an 848-amino-acid chain: Trimethylamine-N-oxide reductase 1 (848 aa).

A signal peptide (tat-type signal) is located at residues 1 to 39; the sequence is MNNNDLFQASRRRFLAQLGGLTVAGMLGPSLLTSRRATA. Residue S191 coordinates Mo-bis(molybdopterin guanine dinucleotide).

This sequence belongs to the prokaryotic molybdopterin-containing oxidoreductase family. Interacts with the N-terminal domain of TorC. It depends on Mo-bis(molybdopterin guanine dinucleotide) as a cofactor. Predicted to be exported by the Tat system. The position of the signal peptide cleavage has not been experimentally proven.

It is found in the periplasm. It catalyses the reaction trimethylamine + 2 Fe(III)-[cytochrome c] + H2O = trimethylamine N-oxide + 2 Fe(II)-[cytochrome c] + 3 H(+). In terms of biological role, reduces trimethylamine-N-oxide (TMAO) into trimethylamine; an anaerobic reaction coupled to energy-yielding reactions. This chain is Trimethylamine-N-oxide reductase 1 (torA), found in Escherichia coli O157:H7.